A 305-amino-acid chain; its full sequence is Tyrosine recombinase XerD (305 aa).

In terms of domain architecture, Core-binding (CB) spans 9-94 (MQDFGYVEQF…AIRRLFQYLH (86 aa)). Residues 115–299 (RLPKDISEEQ…ATERLKQIHS (185 aa)) enclose the Tyr recombinase domain. Residues arginine 155, lysine 179, histidine 251, arginine 254, and histidine 277 contribute to the active site. The O-(3'-phospho-DNA)-tyrosine intermediate role is filled by tyrosine 286.

Belongs to the 'phage' integrase family. XerD subfamily. Forms a cyclic heterotetrameric complex composed of two molecules of XerC and two molecules of XerD.

The protein localises to the cytoplasm. Its function is as follows. Site-specific tyrosine recombinase, which acts by catalyzing the cutting and rejoining of the recombining DNA molecules. The XerC-XerD complex is essential to convert dimers of the bacterial chromosome into monomers to permit their segregation at cell division. It also contributes to the segregational stability of plasmids. This is Tyrosine recombinase XerD from Vibrio vulnificus (strain CMCP6).